The sequence spans 751 residues: Photosystem I P700 chlorophyll a apoprotein A1 (751 aa).

Helical transmembrane passes span 73–96, 159–182, 198–222, 294–312, 349–372, 388–414, 436–458, and 533–551; these read VFSA…FHGA, LYST…WHYH, MNHH…HIAL, MAHH…GHQY, WHAQ…HHMY, LSLF…IFMV, AIIS…LYIH, and FMVH…LILL. 2 residues coordinate [4Fe-4S] cluster: Cys-575 and Cys-584. Transmembrane regions (helical) follow at residues 591–612 and 665–687; these read HVFL…HFSW and LSAY…MFLF. Residue His-676 coordinates chlorophyll a'. Chlorophyll a is bound by residues Met-684 and Tyr-692. Residue Trp-693 coordinates phylloquinone. Residues 725 to 745 traverse the membrane as a helical segment; sequence AVGVAHYLLGGIATTWSFFLA.

This sequence belongs to the PsaA/PsaB family. In terms of assembly, the PsaA/B heterodimer binds the P700 chlorophyll special pair and subsequent electron acceptors. PSI consists of a core antenna complex that captures photons, and an electron transfer chain that converts photonic excitation into a charge separation. The eukaryotic PSI reaction center is composed of at least 11 subunits. P700 is a chlorophyll a/chlorophyll a' dimer, A0 is one or more chlorophyll a, A1 is one or both phylloquinones and FX is a shared 4Fe-4S iron-sulfur center. is required as a cofactor.

The protein localises to the plastid. It is found in the chloroplast thylakoid membrane. It carries out the reaction reduced [plastocyanin] + hnu + oxidized [2Fe-2S]-[ferredoxin] = oxidized [plastocyanin] + reduced [2Fe-2S]-[ferredoxin]. PsaA and PsaB bind P700, the primary electron donor of photosystem I (PSI), as well as the electron acceptors A0, A1 and FX. PSI is a plastocyanin/cytochrome c6-ferredoxin oxidoreductase, converting photonic excitation into a charge separation, which transfers an electron from the donor P700 chlorophyll pair to the spectroscopically characterized acceptors A0, A1, FX, FA and FB in turn. Oxidized P700 is reduced on the lumenal side of the thylakoid membrane by plastocyanin or cytochrome c6. The protein is Photosystem I P700 chlorophyll a apoprotein A1 of Ostreococcus tauri.